We begin with the raw amino-acid sequence, 249 residues long: Protein LicA homolog (249 aa).

The protein belongs to the peptidase S49 family.

In Metamycoplasma hominis (strain ATCC 23114 / DSM 25592 / NBRC 14850 / NCTC 10111 / PG21) (Mycoplasma hominis), this protein is Protein LicA homolog (licA).